A 56-amino-acid polypeptide reads, in one-letter code: Male-specific sperm protein Mst87F (56 aa).

This sequence belongs to the MST(3)CGP family. Testis.

This chain is Male-specific sperm protein Mst87F (Mst87F), found in Drosophila melanogaster (Fruit fly).